A 427-amino-acid polypeptide reads, in one-letter code: tRNA(Ile)-lysidine synthase (427 aa).

ATP is bound at residue serine 27–serine 32.

This sequence belongs to the tRNA(Ile)-lysidine synthase family.

It localises to the cytoplasm. The catalysed reaction is cytidine(34) in tRNA(Ile2) + L-lysine + ATP = lysidine(34) in tRNA(Ile2) + AMP + diphosphate + H(+). Ligates lysine onto the cytidine present at position 34 of the AUA codon-specific tRNA(Ile) that contains the anticodon CAU, in an ATP-dependent manner. Cytidine is converted to lysidine, thus changing the amino acid specificity of the tRNA from methionine to isoleucine. This chain is tRNA(Ile)-lysidine synthase, found in Streptococcus equi subsp. zooepidemicus (strain H70).